The primary structure comprises 98 residues: uncharacterized protein (98 aa).

Basic residues predominate over residues 19–31 (RRMSKRSKNKAKK). The segment at 19–47 (RRMSKRSKNKAKKERVPVEDRPPTPMPTS) is disordered.

The protein belongs to the lymphocryptovirus BNLF2b family.

This is an uncharacterized protein from Homo sapiens (Human).